A 292-amino-acid chain; its full sequence is Diaminopimelate epimerase (292 aa).

Asn13, Gln46, and Asn66 together coordinate substrate. Cys75 serves as the catalytic Proton donor. Substrate is bound by residues 76 to 77, Asn166, Asn199, and 217 to 218; these read GN and ER. The Proton acceptor role is filled by Cys226. 227 to 228 contacts substrate; the sequence is GT.

The protein belongs to the diaminopimelate epimerase family. As to quaternary structure, homodimer.

It localises to the cytoplasm. The catalysed reaction is (2S,6S)-2,6-diaminopimelate = meso-2,6-diaminopimelate. It functions in the pathway amino-acid biosynthesis; L-lysine biosynthesis via DAP pathway; DL-2,6-diaminopimelate from LL-2,6-diaminopimelate: step 1/1. Catalyzes the stereoinversion of LL-2,6-diaminopimelate (L,L-DAP) to meso-diaminopimelate (meso-DAP), a precursor of L-lysine and an essential component of the bacterial peptidoglycan. This is Diaminopimelate epimerase from Ralstonia nicotianae (strain ATCC BAA-1114 / GMI1000) (Ralstonia solanacearum).